The chain runs to 231 residues: 7-cyano-7-deazaguanine synthase (231 aa).

8–18 (FSGGQDSTTCL) is a binding site for ATP. Zn(2+)-binding residues include Cys-188, Cys-197, Cys-200, and Cys-203.

It belongs to the QueC family. The cofactor is Zn(2+).

The enzyme catalyses 7-carboxy-7-deazaguanine + NH4(+) + ATP = 7-cyano-7-deazaguanine + ADP + phosphate + H2O + H(+). The protein operates within purine metabolism; 7-cyano-7-deazaguanine biosynthesis. Functionally, catalyzes the ATP-dependent conversion of 7-carboxy-7-deazaguanine (CDG) to 7-cyano-7-deazaguanine (preQ(0)). The protein is 7-cyano-7-deazaguanine synthase of Cronobacter sakazakii (strain ATCC BAA-894) (Enterobacter sakazakii).